The chain runs to 245 residues: tRNA pseudouridine synthase A (245 aa).

Asp52 (nucleophile) is an active-site residue. Tyr110 contributes to the substrate binding site.

The protein belongs to the tRNA pseudouridine synthase TruA family. In terms of assembly, homodimer.

It carries out the reaction uridine(38/39/40) in tRNA = pseudouridine(38/39/40) in tRNA. Formation of pseudouridine at positions 38, 39 and 40 in the anticodon stem and loop of transfer RNAs. In Ruminiclostridium cellulolyticum (strain ATCC 35319 / DSM 5812 / JCM 6584 / H10) (Clostridium cellulolyticum), this protein is tRNA pseudouridine synthase A.